Consider the following 139-residue polypeptide: Peptide methionine sulfoxide reductase B4 (139 aa).

At Ala-2 the chain carries N-acetylalanine. A MsrB domain is found at 12–133 (EEEWRAVLSP…NSVSINFNPA (122 aa)). Zn(2+) contacts are provided by Cys-51, Cys-54, Cys-97, and Cys-100. Cys-69 and Cys-122 form a disulfide bridge. Cys-122 (nucleophile) is an active-site residue.

This sequence belongs to the MsrB Met sulfoxide reductase family. Zn(2+) serves as cofactor.

The protein localises to the cytoplasm. Its subcellular location is the cytosol. It catalyses the reaction L-methionyl-[protein] + [thioredoxin]-disulfide + H2O = L-methionyl-(R)-S-oxide-[protein] + [thioredoxin]-dithiol. In terms of biological role, catalyzes the reduction of methionine sulfoxide (MetSO) to methionine in proteins. Plays a protective role against oxidative stress by restoring activity to proteins that have been inactivated by methionine oxidation. MSRB family specifically reduces the MetSO R-enantiomer. The chain is Peptide methionine sulfoxide reductase B4 (MSRB4) from Arabidopsis thaliana (Mouse-ear cress).